Consider the following 569-residue polypeptide: Peroxisomal targeting signal receptor (569 aa).

A Glycyl cysteine thioester (Cys-Gly) (interchain with G-Cter in ubiquitin) cross-link involves residue C9. The segment at 10 to 32 (AANANPLAQFFKQSQHDTSLEQS) is amphipathic helix 1 (AH1). A Glycyl lysine isopeptide (Lys-Gly) (interchain with G-Cter in ubiquitin) cross-link involves residue K21. Residues 23 to 42 (SQHDTSLEQSLRNSAHDTHQ) form a disordered region. Residues 57-72 (RAHMEQFMNQSTPFNF) form an amphipathic helix 2 (AH2) region. Short sequence motifs (wxxxF/Y motif) lie at residues 118–122 (WSSEF) and 183–187 (WEQQF). The tract at residues 218-234 (FDQVWDNIQETYADNML) is amphipathic helix 4 (AH4). The WxxxF/Y motif 3 signature appears at 243–247 (WEKDF). 7 TPR repeats span residues 272–305 (LDAYEIGIKLMESGAKLSEAALAFEAAVEQNPGH), 306–339 (VDAWLRLGQVQTQNEKELAGIAALEKCLELSPQN), 340–377 (LVALMTLAISYINEGYDNAAFATLERWIETKYPEVAER), 378–415 (ARNANPDIQADDRFSLNKRVTQLFIKAAQLSPEGANMD), 416–449 (SEVQTGLGVLFYSMEEYSKTLDCFQAAIEHNPND), 450–483 (ALAWNRLGASLANSNKPEQAIEAYSRTLQLNPNF), and 484–517 (VRARYNLGVSFINMGMYRDAVDHLLTGLSMHEVE).

The protein belongs to the peroxisomal targeting signal receptor family. Interacts (via WxxxF/Y and LVxEF motifs) with PEX14; promoting translocation through the PEX13-PEX14 docking complex. In terms of processing, monoubiquitinated at Cys-9 by PEX2 during PEX5 passage through the retrotranslocation channel: monoubiquitination acts as a signal for PEX5 extraction and is required for proper export from peroxisomes and recycling. When PEX5 recycling is compromised, polyubiquitinated at Lys-21 by PEX10 during its passage through the retrotranslocation channel, leading to its degradation.

The protein localises to the cytoplasm. It localises to the cytosol. The protein resides in the peroxisome matrix. Receptor that mediates peroxisomal import of proteins containing a C-terminal PTS1-type tripeptide peroxisomal targeting signal (SKL-type). Binds to cargo proteins containing a PTS1 peroxisomal targeting signal in the cytosol, and translocates them into the peroxisome matrix by passing through the PEX13-PEX14 docking complex along with cargo proteins. PEX5 receptor is then retrotranslocated into the cytosol, leading to release of bound cargo in the peroxisome matrix, and reset for a subsequent peroxisome import cycle. The protein is Peroxisomal targeting signal receptor (PEX5) of Pichia angusta (Yeast).